Consider the following 865-residue polypeptide: TATA box-binding protein-associated factor RNA polymerase I subunit B (865 aa).

The RRN7-type zinc finger occupies 1–33 (MHSAKNEKCNACGGYRFSVNDGFKYCDRCGALF). Zn(2+) contacts are provided by cysteine 9, cysteine 12, cysteine 26, and cysteine 29. The B-reader stretch occupies residues 35-99 (NFEELEEEEG…DFLQQQAIKG (65 aa)). Positions 100–111 (EELELPHDATPD) are B-linker. Residues 112 to 348 (YLYRLALRLF…SQPERMKQGE (237 aa)) form an N-terminal cyclin fold region. The segment at 233-261 (DEDGDQDAQGGQQLDDLTLETTQNPDESI) is disordered. Residues 239–248 (DAQGGQQLDD) are compositionally biased toward low complexity. Residues 252-261 (ETTQNPDESI) show a composition bias toward polar residues. The C-terminal cyclin fold stretch occupies residues 349-496 (VVKPTIVDYA…LLTLRLTFQL (148 aa)).

Belongs to the RRN7/TAF1B family.

The protein localises to the nucleus. It is found in the nucleolus. In terms of biological role, component of RNA polymerase I core factor complex that acts as a GTF2B/TFIIB-like factor and plays a key role in multiple steps during transcription initiation such as pre-initiation complex (PIC) assembly and postpolymerase recruitment events in polymerase I (Pol I) transcription. Binds rDNA promoters and plays a role in Pol I recruitment. In Caenorhabditis elegans, this protein is TATA box-binding protein-associated factor RNA polymerase I subunit B.